We begin with the raw amino-acid sequence, 380 residues long: Tubby-like F-box protein 9 (380 aa).

One can recognise an F-box domain in the interval 30–76 (PFSWSELPEELLREILIRVETVDGGDWPSRRNVVACAGVCRSWRILT). The interval 258 to 283 (SSRSSPVFRSHSKPLRSNSASCSDSG) is disordered. The span at 272 to 283 (LRSNSASCSDSG) shows a compositional bias: polar residues.

The protein belongs to the TUB family. As to quaternary structure, part of a SCF (SKP1-cullin-F-box) protein ligase complex. Interacts with SKP1A/ASK1 and XERICO. Ubiquitous.

The protein operates within protein modification; protein ubiquitination. In terms of biological role, component of SCF(ASK-cullin-F-box) E3 ubiquitin ligase complexes, which may mediate the ubiquitination and subsequent proteasomal degradation of target proteins. Confers sensitivity to ABA during seed germination and early seedling development. The chain is Tubby-like F-box protein 9 from Arabidopsis thaliana (Mouse-ear cress).